The following is a 376-amino-acid chain: GTPase Obg (376 aa).

The Obg domain maps to 2-161 (ASFVDEVLIR…RVVHVELRIV (160 aa)). The OBG-type G domain maps to 162–328 (ADVGFVGLPN…LQEAFVRLSD (167 aa)). Residues 168 to 175 (GLPNAGKS), 193 to 197 (FTTRI), 215 to 218 (DVPG), 282 to 285 (TKLD), and 309 to 311 (SVH) contribute to the GTP site. Residues Ser-175 and Thr-195 each contribute to the Mg(2+) site.

The protein belongs to the TRAFAC class OBG-HflX-like GTPase superfamily. OBG GTPase family. Monomer. Mg(2+) is required as a cofactor.

The protein resides in the cytoplasm. In terms of biological role, an essential GTPase which binds GTP, GDP and possibly (p)ppGpp with moderate affinity, with high nucleotide exchange rates and a fairly low GTP hydrolysis rate. Plays a role in control of the cell cycle, stress response, ribosome biogenesis and in those bacteria that undergo differentiation, in morphogenesis control. This chain is GTPase Obg, found in Treponema pallidum (strain Nichols).